A 257-amino-acid chain; its full sequence is GTP cyclohydrolase FolE2 (257 aa).

Belongs to the GTP cyclohydrolase IV family.

It catalyses the reaction GTP + H2O = 7,8-dihydroneopterin 3'-triphosphate + formate + H(+). It functions in the pathway cofactor biosynthesis; 7,8-dihydroneopterin triphosphate biosynthesis; 7,8-dihydroneopterin triphosphate from GTP: step 1/1. Functionally, converts GTP to 7,8-dihydroneopterin triphosphate. The protein is GTP cyclohydrolase FolE2 of Dictyoglomus thermophilum (strain ATCC 35947 / DSM 3960 / H-6-12).